The sequence spans 443 residues: UDP-N-acetylmuramate--L-alanine ligase (443 aa).

Gly110 to Ser116 provides a ligand contact to ATP.

Belongs to the MurCDEF family.

The protein localises to the cytoplasm. It catalyses the reaction UDP-N-acetyl-alpha-D-muramate + L-alanine + ATP = UDP-N-acetyl-alpha-D-muramoyl-L-alanine + ADP + phosphate + H(+). It functions in the pathway cell wall biogenesis; peptidoglycan biosynthesis. In terms of biological role, cell wall formation. The sequence is that of UDP-N-acetylmuramate--L-alanine ligase from Streptococcus agalactiae serotype V (strain ATCC BAA-611 / 2603 V/R).